The sequence spans 534 residues: O-phosphoserine--tRNA(Cys) ligase (534 aa).

Substrate is bound by residues 186–188 (HMT), 231–233 (SAS), 273–274 (YY), and Asn-325.

This sequence belongs to the class-II aminoacyl-tRNA synthetase family. O-phosphoseryl-tRNA(Cys) synthetase subfamily. As to quaternary structure, homotetramer. Interacts with SepCysS.

It carries out the reaction tRNA(Cys) + O-phospho-L-serine + ATP = O-phospho-L-seryl-tRNA(Cys) + AMP + diphosphate. Catalyzes the attachment of O-phosphoserine (Sep) to tRNA(Cys). The sequence is that of O-phosphoserine--tRNA(Cys) ligase (sepS) from Archaeoglobus fulgidus (strain ATCC 49558 / DSM 4304 / JCM 9628 / NBRC 100126 / VC-16).